The primary structure comprises 265 residues: uncharacterized protein (265 aa).

Residue Glu-47 is part of the active site.

Belongs to the PhzF family.

This is an uncharacterized protein from Halalkalibacterium halodurans (strain ATCC BAA-125 / DSM 18197 / FERM 7344 / JCM 9153 / C-125) (Bacillus halodurans).